The primary structure comprises 128 residues: Probable 4-amino-4-deoxy-L-arabinose-phosphoundecaprenol flippase subunit ArnF (128 aa).

The Cytoplasmic portion of the chain corresponds to 1-2 (MG). A helical transmembrane segment spans residues 3 to 23 (LMWGLFSVIIASVAQLSLGFA). Topologically, residues 24–35 (ASHLPPMTHLWD) are periplasmic. The helical transmembrane segment at 36 to 56 (FIAALLAFGLDARILLLGLLG) threads the bilayer. Topologically, residues 57 to 76 (YLLSVFCWYKTLHKLALSKA) are cytoplasmic. Residues 77-97 (YALLSMSYVLVWIASMVLPGW) form a helical membrane-spanning segment. Over 98-100 (EGT) the chain is Periplasmic. The chain crosses the membrane as a helical span at residues 101-121 (FSLKALLGVACIMSGLMLIFL). At 122–128 (PMTKQRY) the chain is on the cytoplasmic side.

This sequence belongs to the ArnF family. As to quaternary structure, heterodimer of ArnE and ArnF.

The protein resides in the cell inner membrane. Its pathway is bacterial outer membrane biogenesis; lipopolysaccharide biosynthesis. Translocates 4-amino-4-deoxy-L-arabinose-phosphoundecaprenol (alpha-L-Ara4N-phosphoundecaprenol) from the cytoplasmic to the periplasmic side of the inner membrane. The polypeptide is Probable 4-amino-4-deoxy-L-arabinose-phosphoundecaprenol flippase subunit ArnF (Escherichia coli (strain 55989 / EAEC)).